Consider the following 1379-residue polypeptide: DNA-directed RNA polymerase subunit beta'' (1379 aa).

Residues cysteine 220, cysteine 291, cysteine 298, and cysteine 301 each contribute to the Zn(2+) site.

The protein belongs to the RNA polymerase beta' chain family. RpoC2 subfamily. In terms of assembly, in plastids the minimal PEP RNA polymerase catalytic core is composed of four subunits: alpha, beta, beta', and beta''. When a (nuclear-encoded) sigma factor is associated with the core the holoenzyme is formed, which can initiate transcription. Zn(2+) is required as a cofactor.

The protein localises to the plastid. The enzyme catalyses RNA(n) + a ribonucleoside 5'-triphosphate = RNA(n+1) + diphosphate. In terms of biological role, DNA-dependent RNA polymerase catalyzes the transcription of DNA into RNA using the four ribonucleoside triphosphates as substrates. The chain is DNA-directed RNA polymerase subunit beta'' from Cuscuta reflexa (Southern Asian dodder).